Here is a 492-residue protein sequence, read N- to C-terminus: MPRFVDRVVIHARAGSGGNGCASVHREKFKPLGGPDGGNGGRGGSIVFVVDPQVHTLLDFHFHPHISAPSGKQGMGNNRDGAAGADLEVKVPDGTVVLDENGRLLADLVGAGTRFEAAAGGRGGLGNAALASRARKAPGFALLGEPGETRELTLELKTVADVGLIGFPSAGKSSLVSAISAAKPKIADYPFTTLVPNLGVVSAGEHTFTVADVPGLIPGASAGRGLGLDFLRHIERCAVLVHVIDCATADPGRDPISDIDALEAELAAYTPTLQGDVTLGDLTERPRAVVLNKIDVPEARELAEFVRDEIAERGWPVFLVSTVAREGLQPLIFGLWQMISEYQSAQPEIVPRRSVIRPVPVDDSGFRVEPDPRQPGAFVVSGARPERWVRQTNFDNDEAVGYLADRLARLGVEEELLRLGARPGCAVTIGDMTFDWEPQTPAGQQVVLSGRGTDARLERTERVGAAERKAARRQRRTGDDAERGTTERGENT.

The 158-residue stretch at 2–159 (PRFVDRVVIH…RELTLELKTV (158 aa)) folds into the Obg domain. In terms of domain architecture, OBG-type G spans 160 to 340 (ADVGLIGFPS…LIFGLWQMIS (181 aa)). Residues 166-173 (GFPSAGKS), 191-195 (FTTLV), 212-215 (DVPG), 292-295 (NKID), and 321-323 (STV) contribute to the GTP site. Residues Ser-173 and Thr-193 each contribute to the Mg(2+) site. Residues 358–438 (PVPVDDSGFR…IGDMTFDWEP (81 aa)) enclose the OCT domain. A disordered region spans residues 449 to 492 (SGRGTDARLERTERVGAAERKAARRQRRTGDDAERGTTERGENT). Composition is skewed to basic and acidic residues over residues 453-469 (TDARLERTERVGAAERK) and 476-492 (RTGDDAERGTTERGENT).

The protein belongs to the TRAFAC class OBG-HflX-like GTPase superfamily. OBG GTPase family. As to quaternary structure, monomer. Mg(2+) serves as cofactor.

Its subcellular location is the cytoplasm. In terms of biological role, an essential GTPase which binds GTP, GDP and possibly (p)ppGpp with moderate affinity, with high nucleotide exchange rates and a fairly low GTP hydrolysis rate. Plays a role in control of the cell cycle, stress response, ribosome biogenesis and in those bacteria that undergo differentiation, in morphogenesis control. In Mycobacterium avium (strain 104), this protein is GTPase Obg.